Reading from the N-terminus, the 310-residue chain is Ribosomal RNA small subunit methyltransferase H (310 aa).

Residues 33-35 (AGH), Asp53, Phe79, Asp100, and Gln107 contribute to the S-adenosyl-L-methionine site.

The protein belongs to the methyltransferase superfamily. RsmH family.

The protein localises to the cytoplasm. It carries out the reaction cytidine(1402) in 16S rRNA + S-adenosyl-L-methionine = N(4)-methylcytidine(1402) in 16S rRNA + S-adenosyl-L-homocysteine + H(+). Its function is as follows. Specifically methylates the N4 position of cytidine in position 1402 (C1402) of 16S rRNA. In Clostridium perfringens (strain 13 / Type A), this protein is Ribosomal RNA small subunit methyltransferase H.